Consider the following 328-residue polypeptide: Phosphate acyltransferase (328 aa).

It belongs to the PlsX family. Homodimer. Probably interacts with PlsY.

Its subcellular location is the cytoplasm. The catalysed reaction is a fatty acyl-[ACP] + phosphate = an acyl phosphate + holo-[ACP]. The protein operates within lipid metabolism; phospholipid metabolism. Catalyzes the reversible formation of acyl-phosphate (acyl-PO(4)) from acyl-[acyl-carrier-protein] (acyl-ACP). This enzyme utilizes acyl-ACP as fatty acyl donor, but not acyl-CoA. This Staphylococcus aureus (strain MRSA252) protein is Phosphate acyltransferase.